Consider the following 388-residue polypeptide: GTPase Obg (388 aa).

Residues 1 to 159 (MKFVDEAVIK…RELRLELLLL (159 aa)) form the Obg domain. In terms of domain architecture, OBG-type G spans 160–333 (ADVGMLGLPN…LCYKLADFME (174 aa)). GTP contacts are provided by residues 166–173 (GLPNAGKS), 191–195 (FTTLI), 213–216 (DIPG), 283–286 (NKVD), and 314–316 (SAV). Positions 173 and 193 each coordinate Mg(2+). The tract at residues 359–380 (NQGEVITEDDDDWDDWDDEEDD) is disordered. Over residues 364–380 (ITEDDDDWDDWDDEEDD) the composition is skewed to acidic residues.

It belongs to the TRAFAC class OBG-HflX-like GTPase superfamily. OBG GTPase family. As to quaternary structure, monomer. Mg(2+) is required as a cofactor.

Its subcellular location is the cytoplasm. In terms of biological role, an essential GTPase which binds GTP, GDP and possibly (p)ppGpp with moderate affinity, with high nucleotide exchange rates and a fairly low GTP hydrolysis rate. Plays a role in control of the cell cycle, stress response, ribosome biogenesis and in those bacteria that undergo differentiation, in morphogenesis control. In Vibrio vulnificus (strain YJ016), this protein is GTPase Obg.